A 340-amino-acid chain; its full sequence is N-acetyl-gamma-glutamyl-phosphate reductase (340 aa).

Cys-146 is an active-site residue.

It belongs to the NAGSA dehydrogenase family. Type 1 subfamily.

The protein resides in the cytoplasm. The catalysed reaction is N-acetyl-L-glutamate 5-semialdehyde + phosphate + NADP(+) = N-acetyl-L-glutamyl 5-phosphate + NADPH + H(+). It participates in amino-acid biosynthesis; L-arginine biosynthesis; N(2)-acetyl-L-ornithine from L-glutamate: step 3/4. Catalyzes the NADPH-dependent reduction of N-acetyl-5-glutamyl phosphate to yield N-acetyl-L-glutamate 5-semialdehyde. The polypeptide is N-acetyl-gamma-glutamyl-phosphate reductase (Streptococcus sanguinis (strain SK36)).